Here is a 433-residue protein sequence, read N- to C-terminus: T-box transcription factor T (433 aa).

Positions 49 to 217 (LWLRFKELTN…YNPFAKAFLD (169 aa)) form a DNA-binding region, T-box.

In terms of assembly, monomer. Binds DNA as a monomer.

It localises to the nucleus. Involved in the transcriptional regulation of genes required for mesoderm formation and differentiation. Binds to a palindromic site (called T site) and activates gene transcription when bound to such a site. In Gallus gallus (Chicken), this protein is T-box transcription factor T.